Consider the following 450-residue polypeptide: UDP-N-acetylmuramate--L-alanine ligase (450 aa).

Residue 112–118 (GTHGKTT) participates in ATP binding.

Belongs to the MurCDEF family.

The protein resides in the cytoplasm. It carries out the reaction UDP-N-acetyl-alpha-D-muramate + L-alanine + ATP = UDP-N-acetyl-alpha-D-muramoyl-L-alanine + ADP + phosphate + H(+). It participates in cell wall biogenesis; peptidoglycan biosynthesis. In terms of biological role, cell wall formation. The polypeptide is UDP-N-acetylmuramate--L-alanine ligase (Endomicrobium trichonymphae).